We begin with the raw amino-acid sequence, 720 residues long: Neurochondrin (720 aa).

Belongs to the neurochondrin family.

It localises to the cytoplasm. Its subcellular location is the cytosol. The protein resides in the cell projection. It is found in the dendrite. The protein localises to the postsynapse. Probably involved in signal transduction, in the nervous system. Required for the spatial learning process. May also be involved in neurite outgrowth. The protein is Neurochondrin (ncdn) of Xenopus laevis (African clawed frog).